The primary structure comprises 123 residues: Ribosome-binding factor A (123 aa).

This sequence belongs to the RbfA family. In terms of assembly, monomer. Binds 30S ribosomal subunits, but not 50S ribosomal subunits or 70S ribosomes.

It localises to the cytoplasm. In terms of biological role, one of several proteins that assist in the late maturation steps of the functional core of the 30S ribosomal subunit. Associates with free 30S ribosomal subunits (but not with 30S subunits that are part of 70S ribosomes or polysomes). Required for efficient processing of 16S rRNA. May interact with the 5'-terminal helix region of 16S rRNA. This chain is Ribosome-binding factor A, found in Chlorobium chlorochromatii (strain CaD3).